A 100-amino-acid chain; its full sequence is ESAT-6-like protein EsxT (100 aa).

It belongs to the WXG100 family. ESAT-6 subfamily. Forms a tight 1:1 complex with EsxU.

The protein resides in the secreted. The protein is ESAT-6-like protein EsxT of Mycobacterium tuberculosis (strain CDC 1551 / Oshkosh).